The sequence spans 142 residues: Transcription antitermination protein NusB (142 aa).

It belongs to the NusB family.

Functionally, involved in transcription antitermination. Required for transcription of ribosomal RNA (rRNA) genes. Binds specifically to the boxA antiterminator sequence of the ribosomal RNA (rrn) operons. In Thermobifida fusca (strain YX), this protein is Transcription antitermination protein NusB.